A 149-amino-acid polypeptide reads, in one-letter code: Large ribosomal subunit protein bL9 (149 aa).

Belongs to the bacterial ribosomal protein bL9 family.

Its function is as follows. Binds to the 23S rRNA. This chain is Large ribosomal subunit protein bL9, found in Mannheimia succiniciproducens (strain KCTC 0769BP / MBEL55E).